The following is a 689-amino-acid chain: DNA-directed RNA polymerase subunit beta' (689 aa).

Zn(2+)-binding residues include Cys-69, Cys-71, Cys-87, and Cys-90. 3 residues coordinate Mg(2+): Asp-489, Asp-491, and Asp-493.

Belongs to the RNA polymerase beta' chain family. RpoC1 subfamily. In plastids the minimal PEP RNA polymerase catalytic core is composed of four subunits: alpha, beta, beta', and beta''. When a (nuclear-encoded) sigma factor is associated with the core the holoenzyme is formed, which can initiate transcription. It depends on Mg(2+) as a cofactor. The cofactor is Zn(2+).

It localises to the plastid. It is found in the chloroplast. It catalyses the reaction RNA(n) + a ribonucleoside 5'-triphosphate = RNA(n+1) + diphosphate. In terms of biological role, DNA-dependent RNA polymerase catalyzes the transcription of DNA into RNA using the four ribonucleoside triphosphates as substrates. The polypeptide is DNA-directed RNA polymerase subunit beta' (Lactuca sativa (Garden lettuce)).